A 337-amino-acid chain; its full sequence is Putative olfactory receptor 1F12P (337 aa).

Residues 1-25 (MEGKNQTNISEFLLLGFSSWQQQQV) lie on the Extracellular side of the membrane. Asparagine 5 and asparagine 8 each carry an N-linked (GlcNAc...) asparagine glycan. The chain crosses the membrane as a helical span at residues 26–49 (LLFALFLCLYLTGLFGNLLILLAI). Over 50 to 57 (GSDHCLHT) the chain is Cytoplasmic. A helical transmembrane segment spans residues 58-79 (PMYFFLANLSLVDLCLPSATVP). The Extracellular portion of the chain corresponds to 80–100 (KMLLNIQTQTQTISYPGCLAQ). Cysteine 97 and cysteine 189 are disulfide-bonded. Residues 101-120 (MYFCMMFANMDNFLLTVMAY) form a helical membrane-spanning segment. Residues 121–139 (DRYVAICHPLHYSTIMALR) lie on the Cytoplasmic side of the membrane. A helical transmembrane segment spans residues 140–158 (LCASLVAAPWVIAILNPLL). Residues 159 to 196 (HTLMMAHLHFCSDNVIHHFFCDINSLLPLSCSDTSLNQ) lie on the Extracellular side of the membrane. The chain crosses the membrane as a helical span at residues 197–219 (LSVLATVGLIFVVPSVCILVSYI). Residues 220 to 236 (LIVSAVMKVPSAQGKLK) lie on the Cytoplasmic side of the membrane. Residues 237–259 (AFSTCGSHLALVILFYGAITGVY) form a helical membrane-spanning segment. The Extracellular segment spans residues 260 to 272 (MSPLSNHSTEKDS). Asparagine 265 is a glycosylation site (N-linked (GlcNAc...) asparagine). Residues 273-292 (AASVIFMVVAPVLNPFIYSL) traverse the membrane as a helical segment. Residues 293 to 337 (RNNELKGTLKKTLSRPGAVAHACNPSTLGGRGGWIMRSGDRDHPG) lie on the Cytoplasmic side of the membrane.

It belongs to the G-protein coupled receptor 1 family.

It localises to the cell membrane. Odorant receptor. This chain is Putative olfactory receptor 1F12P, found in Homo sapiens (Human).